We begin with the raw amino-acid sequence, 761 residues long: Mitochondrial intermediate peptidase (761 aa).

A mitochondrion-targeting transit peptide spans 1–37 (MLIQKILLNKEISRLPRILSILNYTGLRWLSGSSGRN). His-547 contacts Zn(2+). The active site involves Glu-548. Zn(2+) is bound by residues His-551 and His-554.

This sequence belongs to the peptidase M3 family. Zn(2+) is required as a cofactor.

The protein localises to the mitochondrion matrix. It catalyses the reaction Release of an N-terminal octapeptide as second stage of processing of some proteins imported into the mitochondrion.. Cleaves proteins, imported into the mitochondrion, to their mature size. While most mitochondrial precursor proteins are processed to the mature form in one step by mitochondrial processing peptidase (MPP), the sequential cleavage by MIP of an octapeptide after initial processing by MPP is a required step for a subgroup of nuclear-encoded precursor proteins destined for the matrix or the inner membrane. This Candida glabrata (strain ATCC 2001 / BCRC 20586 / JCM 3761 / NBRC 0622 / NRRL Y-65 / CBS 138) (Yeast) protein is Mitochondrial intermediate peptidase (OCT1).